The primary structure comprises 303 residues: Trans-enoyl reductase tazE (303 aa).

Residues 1–26 (MTAEHDAAILPKPGGPLAVGKRATPE) are disordered. 44-49 (CDYYQR) contacts NADP(+). 136 to 143 (LAVLTALT) provides a ligand contact to substrate. Residues 170–173 (SSSV), 193–196 (SPKH), Y211, and 246–247 (LD) each bind NADP(+). 265–269 (VLPEC) is a binding site for substrate.

This sequence belongs to the zinc-containing alcohol dehydrogenase family.

It participates in secondary metabolite biosynthesis. Its function is as follows. Trans-enoyl reductase; part of the gene cluster that mediates the biosynthesis of azaterrilone A and other azaphilones, a class of fungal metabolites characterized by a highly oxygenated pyrano-quinone bicyclic core and exhibiting a broad range of bioactivities. The first step of the pathway begins with the non-reducing polyketide synthase tazA that assembles one acetyl-CoA starter unit, five malonyl-CoA units, and catalyzes a series of Claisen condensations, methylation, PT-mediated cyclization, and finally releases the first hexaketide precursor through the R-domain. The tazA product then undergoes reduction on its terminal ketone and the following pyran-ring formation by yet undetermined enzyme(s). Dehydration and enoyl reduction, possibly involving the trans-enoyl reductase tazE leads to the next intermediate. TazD is predicted as an acetyltransferase and might catalyze the acetylation steps leading to the synthesis of azaterrilone A. Azaterrilone A is not the final product of the taz pathway and both the highly reducing polyketide synthase tazB and the dual enzyme tazHJ catalyze late steps of the pathway, leading to the production of the 2 final stereoisomers that contain additional polyketide modification whose structures have still to be determined. This is Trans-enoyl reductase tazE from Aspergillus terreus (strain NIH 2624 / FGSC A1156).